The following is a 96-amino-acid chain: Large ribosomal subunit protein eL43 (96 aa).

The C4-type zinc-finger motif lies at 41–62; it reads CPVCAFPKLKRAGTSIWVCEKC.

The protein belongs to the eukaryotic ribosomal protein eL43 family. Requires Zn(2+) as cofactor.

The polypeptide is Large ribosomal subunit protein eL43 (Methanococcus maripaludis (strain C5 / ATCC BAA-1333)).